The chain runs to 680 residues: WD repeat-containing protein 48 homolog (680 aa).

WD repeat units lie at residues 26–65 (QHRNGVNSLQLDPNNGKLYSAGRDAIIRVWNTRSESSEKY), 71–110 (HHNDWVNDIVLCCNGRNLISASCDTTVKVWNAQKGFCMST), 113–152 (THRDYVQALAYAKDREQVASAGLDKAIFLWDVNTLTALTA), 164–203 (GSKDSIYSLAMNPSGTVIVSGSTENILRIWDPRTCMRSMK), 206–245 (GHTENVRCLVVSPDGNQVVSGSSDGTIKVWNLGQQRCVQT), 248–287 (VHKEGVWSLLMSENFQYIISGSRDQNIIVTEMRNPSNKTL), 290–329 (EEKAPVLSLGYNMDKTGVWATTWNSDIRCWKLPMYDRGTL), and 350–389 (KGGAAIKECTVLNDKRYILTKDSQDQVVLYDVLRVVKKDT). Residues 594–618 (TPSGANANNSLQNSQSDGNSEGSQL) form a disordered region. The segment covering 596-609 (SGANANNSLQNSQS) has biased composition (low complexity).

Belongs to the WD repeat WDR48 family. In terms of assembly, catalytic component of the Usp12-46 deubiquitylase complex consisting of Usp12-46, Wdr20 and Uaf1; regulatory subunit that, together wtih Wdr20, stabilizes Usp12-46. The Usp12-46 deubiquitylase complex associates with arr/arrow; the interaction leads to deubiquitination and stabilization of arr/arrow.

Functionally, regulatory component of the Usp12-46 deubiquitylase complex. activates deubiquitination by increasing the catalytic turnover without increasing the affinity of deubiquitinating enzymes for the substrate. The complex deubiquitylates the wg/wingless-signaling receptor arr/arrow, which stabilizes the receptor and increases its concentration at the cell surface; this enhances the sensitivity of cells to wg/wingless-signal stimulation. This increases the amplitude and spatial range of the signaling response to the wg/wingless morphogen gradient, facilitating the precise concentration-dependent regulation of its target genes. Together with Wdr20 and Usp12-46 required for wg/wingless-mediated signaling in the wing imaginal disc and for wg/wingless-dependent regulation of intestinal stem cell proliferation. This Drosophila persimilis (Fruit fly) protein is WD repeat-containing protein 48 homolog.